A 408-amino-acid chain; its full sequence is LysM domain-containing protein ARB_01488 (408 aa).

The first 17 residues, 1-17 (MVKYALLPLVAVSLVQA), serve as a signal peptide directing secretion. The region spanning 42 to 91 (SWINVVDASGKLTCDAFLDTINVAKRQFIFWNPQLNSDCSNIQSKASYCA) is the LysM 1 domain. The tract at residues 98–178 (SKQTRGQMDP…HGPKEAPPPD (81 aa)) is disordered. The segment covering 106 to 116 (DPPPKTKPLPP) has biased composition (pro residues). 2 consecutive LysM domains span residues 270–320 (QYHT…RVCV) and 360–406 (SFEL…YACV).

Its subcellular location is the secreted. Its function is as follows. Might have a role in sequestration of chitin oligosaccharides (breakdown products of fungal cell walls that are released during invasion and act as triggers of host immunity) to dampen host defense. The sequence is that of LysM domain-containing protein ARB_01488 from Arthroderma benhamiae (strain ATCC MYA-4681 / CBS 112371) (Trichophyton mentagrophytes).